The primary structure comprises 358 residues: Chorismate synthase (358 aa).

The segment at 39–61 (ADIQPFLDKRRPGQSRHTTQRQE) is disordered. Residues Arg48 and Arg54 each contribute to the NADP(+) site. FMN contacts are provided by residues 125-127 (RSS), 237-238 (NA), Gly284, 299-303 (KPTSS), and Arg325.

This sequence belongs to the chorismate synthase family. As to quaternary structure, homotetramer. The cofactor is FMNH2.

The enzyme catalyses 5-O-(1-carboxyvinyl)-3-phosphoshikimate = chorismate + phosphate. It participates in metabolic intermediate biosynthesis; chorismate biosynthesis; chorismate from D-erythrose 4-phosphate and phosphoenolpyruvate: step 7/7. In terms of biological role, catalyzes the anti-1,4-elimination of the C-3 phosphate and the C-6 proR hydrogen from 5-enolpyruvylshikimate-3-phosphate (EPSP) to yield chorismate, which is the branch point compound that serves as the starting substrate for the three terminal pathways of aromatic amino acid biosynthesis. This reaction introduces a second double bond into the aromatic ring system. In Sphingopyxis alaskensis (strain DSM 13593 / LMG 18877 / RB2256) (Sphingomonas alaskensis), this protein is Chorismate synthase.